Here is a 307-residue protein sequence, read N- to C-terminus: N-acetylmuramic acid 6-phosphate etherase (307 aa).

The SIS domain occupies 59–222 (TADRLRQGGR…STGVMVKLGK (164 aa)). The active-site Proton donor is E87. The active site involves E118.

Belongs to the GCKR-like family. MurNAc-6-P etherase subfamily. In terms of assembly, homodimer.

It catalyses the reaction N-acetyl-D-muramate 6-phosphate + H2O = N-acetyl-D-glucosamine 6-phosphate + (R)-lactate. It participates in amino-sugar metabolism; N-acetylmuramate degradation. Functionally, specifically catalyzes the cleavage of the D-lactyl ether substituent of MurNAc 6-phosphate, producing GlcNAc 6-phosphate and D-lactate. This Nostoc sp. (strain PCC 7120 / SAG 25.82 / UTEX 2576) protein is N-acetylmuramic acid 6-phosphate etherase.